A 623-amino-acid chain; its full sequence is Cilia- and flagella-associated protein 52 (623 aa).

WD repeat units lie at residues 65–109, 112–153, 159–198, 291–330, 333–372, 375–414, 418–457, 462–501, 503–544, 546–585, and 588–623; these read GHGN…LMAR, LHKG…AICG, LNVGNATTVIFSKCRDEMFVTAGNGTIRVWELDLPNRKIW, QLQGGITSITLRGEGHQFFVGTEESHIYRVNFTNFKETLI, CHFESVEDIVFPFGTAELFATCAKKDIRVWHTLTNRELLR, VPNMTCHGIDFMRDGKSIISAWDDGRIRAFAPETGRLMYV, AHRIGVTAIATTSDCKRVISGGGEGEVRVWHIGHQTQKLE, EHKSSVSCIRVKKSNEECVTASTDGTCIIWDLVRLRRNQM, LANT…RELD, SLSGAVNGMDITVEGVHFVTGGNDHLVKVWDYNEGEVTHV, and GHSGNITRIRISPGNQYIVSVSADGAILRWKYPFPS.

The protein belongs to the CFAP52 family. In terms of assembly, microtubule inner protein component of sperm flagellar doublet microtubules. Interacts with BRCA2. Interacts with the CCT chaperonin complex. Interacts with HSP70. Interacts with AK8. Interacts with CFAP45. Interacts with DNAI1. Interacts with IQDC. Expressed in trachea multiciliated cells.

It is found in the cytoplasm. Its subcellular location is the cytoskeleton. It localises to the cilium axoneme. The protein resides in the flagellum axoneme. Microtubule inner protein (MIP) part of the dynein-decorated doublet microtubules (DMTs) in cilia axoneme. Important for proper ciliary and flagellar beating. May act in cooperation with CFAP45 and axonemal dynein subunit DNAH11. May play a role in cell growth and/or survival. The chain is Cilia- and flagella-associated protein 52 (CFAP52) from Bos taurus (Bovine).